The sequence spans 166 residues: KH homology domain-containing protein 1C (166 aa).

The KH; atypical domain maps to 19–78; that stretch reads PLVFDMEEDKEDYIFGPHDEYLHTLEVHSNTLIQLERWFTPTGQTRVTVVGPLKARLWVM.

This sequence belongs to the KHDC1 family.

In Mus musculus (Mouse), this protein is KH homology domain-containing protein 1C (Khdc1c).